A 163-amino-acid chain; its full sequence is MDHSESLTFNQLTQDYINKLKDAFQMLDEDEDGLISRGDLTKIYATLGKTLTDEEWSKMVPDNDTSTAEVGEEGVSFPIFLSIMGKNLSQFPEREELEESLKAIGRGHDLNVPLNEVIDSLKEAGFENPEEEFAKLFKLFTTNQQATEERTFRGKLFLDSITD.

2 EF-hand domains span residues 15-50 (DYINKLKDAFQMLDEDEDGLISRGDLTKIYATLGKT) and 92-127 (PEREELEESLKAIGRGHDLNVPLNEVIDSLKEAGFE). Residues Asp-28, Asp-30, Asp-32, and Asp-39 each coordinate Ca(2+).

Interacts with the IQ domain of MYO1.

The protein resides in the bud neck. Functionally, regulatory light chain for the class II conventional myosin MYO1. May play a role in the disassembly of the MYO1 ring at the bud neck at the end of its contraction during cytokinesis. In Saccharomyces cerevisiae (strain ATCC 204508 / S288c) (Baker's yeast), this protein is Myosin light chain 2 (MLC2).